We begin with the raw amino-acid sequence, 216 residues long: MSCLPALDKFLQNYHQSYLSTLGELPRYYPQGEPSLCIQGEFDESSDEAVSWLPVKREQLGSFANVEHALELTLWRDINHFYGEYFAAPVLFDSPWGTGELLQVWNEADFDALQQNIIGHLMMKQKLKQPATWFIGLLDEGDKMLTVDNANGSVWVEIPGELPSAQLAPSVAEFIESLSPRIAPPVKHEELPMPALEHPGIFASFKRMWHNLIGKR.

This sequence belongs to the Syd family.

It localises to the cell inner membrane. Functionally, interacts with the SecY protein in vivo. May bind preferentially to an uncomplexed state of SecY, thus functioning either as a chelating agent for excess SecY in the cell or as a regulatory factor that negatively controls the translocase function. In Shewanella sp. (strain MR-4), this protein is Protein Syd.